Here is a 277-residue protein sequence, read N- to C-terminus: Putative phosphoenolpyruvate synthase regulatory protein (277 aa).

157–164 (GVSRSGKT) lines the ADP pocket.

It belongs to the pyruvate, phosphate/water dikinase regulatory protein family. PSRP subfamily.

The enzyme catalyses [pyruvate, water dikinase] + ADP = [pyruvate, water dikinase]-phosphate + AMP + H(+). It carries out the reaction [pyruvate, water dikinase]-phosphate + phosphate + H(+) = [pyruvate, water dikinase] + diphosphate. Bifunctional serine/threonine kinase and phosphorylase involved in the regulation of the phosphoenolpyruvate synthase (PEPS) by catalyzing its phosphorylation/dephosphorylation. The protein is Putative phosphoenolpyruvate synthase regulatory protein of Vibrio atlanticus (strain LGP32) (Vibrio splendidus (strain Mel32)).